Here is a 276-residue protein sequence, read N- to C-terminus: tRNA dimethylallyltransferase (276 aa).

The interaction with substrate tRNA stretch occupies residues 9–12; that stretch reads DSLS.

The protein belongs to the IPP transferase family. In terms of assembly, monomer. Mg(2+) is required as a cofactor.

The catalysed reaction is adenosine(37) in tRNA + dimethylallyl diphosphate = N(6)-dimethylallyladenosine(37) in tRNA + diphosphate. Its function is as follows. Catalyzes the transfer of a dimethylallyl group onto the adenine at position 37 in tRNAs that read codons beginning with uridine, leading to the formation of N6-(dimethylallyl)adenosine (i(6)A). The polypeptide is tRNA dimethylallyltransferase (miaA) (Helicobacter pylori (strain G27)).